Reading from the N-terminus, the 595-residue chain is NADPH-dependent diflavin oxidoreductase 1 (595 aa).

A Flavodoxin-like domain is found at 6 to 150 (VLVLYGSQTG…VIDPWLLSFW (145 aa)). FMN-binding positions include 12–17 (SQTGTA), 59–62 (ATTG), 97–106 (LGDSSYPKFN), and Asp-132. The FAD-binding FR-type domain maps to 204-444 (LRPFPAPLVF…WVKKGSLKFP (241 aa)). FAD contacts are provided by residues Arg-348, 380–383 (RSFS), and 414–417 (GLCS). Residues Thr-458, 513 to 514 (SR), and 519 to 523 (KVYVQ) contribute to the NADP(+) site. Position 594 (Trp-594) interacts with FAD.

The protein belongs to the NADPH-dependent diflavin oxidoreductase NDOR1 family. In the N-terminal section; belongs to the flavodoxin family. This sequence in the C-terminal section; belongs to the flavoprotein pyridine nucleotide cytochrome reductase family. In terms of assembly, interacts with ciapin1; as part of the cytosolic iron-sulfur (Fe-S) protein assembly (CIA) machinery. It depends on FAD as a cofactor. The cofactor is FMN.

It localises to the cytoplasm. Its subcellular location is the perinuclear region. It catalyses the reaction 2 oxidized [2Fe-2S]-[protein] + NADPH = 2 reduced [2Fe-2S]-[protein] + NADP(+) + H(+). In terms of biological role, NADPH-dependent reductase which is a central component of the cytosolic iron-sulfur (Fe-S) protein assembly (CIA) machinery. Transfers electrons from NADPH via its FAD and FMN prosthetic groups to the [2Fe-2S] cluster of ciapin1, another key component of the CIA machinery. In turn, this reduced cluster provides electrons for assembly of cytosolic iron-sulfur cluster proteins. It can also reduce the [2Fe-2S] cluster of cisd1 and activate this protein implicated in Fe/S cluster repair. This is NADPH-dependent diflavin oxidoreductase 1 from Danio rerio (Zebrafish).